Here is a 368-residue protein sequence, read N- to C-terminus: Ribosomal RNA large subunit methyltransferase M (368 aa).

Residues Ser189, 222-225, Asp241, Asp261, and Asp278 contribute to the S-adenosyl-L-methionine site; that span reads CPGG. Lys307 functions as the Proton acceptor in the catalytic mechanism.

Belongs to the class I-like SAM-binding methyltransferase superfamily. RNA methyltransferase RlmE family. RlmM subfamily. As to quaternary structure, monomer.

The protein resides in the cytoplasm. It catalyses the reaction cytidine(2498) in 23S rRNA + S-adenosyl-L-methionine = 2'-O-methylcytidine(2498) in 23S rRNA + S-adenosyl-L-homocysteine + H(+). Functionally, catalyzes the 2'-O-methylation at nucleotide C2498 in 23S rRNA. The chain is Ribosomal RNA large subunit methyltransferase M from Yersinia pestis bv. Antiqua (strain Angola).